The sequence spans 454 residues: Bifunctional protein GlmU (454 aa).

The segment at 1–227 is pyrophosphorylase; that stretch reads MTQLSVVILA…FMEVEGANNR (227 aa). UDP-N-acetyl-alpha-D-glucosamine is bound by residues 9–12, Lys-23, Gln-74, 79–80, 101–103, Gly-138, Glu-152, Asn-167, and Asn-225; these read LAAG, GT, and YGD. Asp-103 is a binding site for Mg(2+). Asn-225 is a Mg(2+) binding site. Residues 228 to 248 form a linker region; sequence LQLAALERFYQKTQAEKLLLA. The tract at residues 249–454 is N-acetyltransferase; that stretch reads GVRLIDPARF…QGWQRPTKKK (206 aa). UDP-N-acetyl-alpha-D-glucosamine contacts are provided by Arg-331 and Lys-349. His-361 (proton acceptor) is an active-site residue. UDP-N-acetyl-alpha-D-glucosamine is bound by residues Tyr-364 and Asn-375. Acetyl-CoA contacts are provided by residues Ala-378, 384–385, Ser-403, Ala-421, and Arg-438; that span reads NY.

This sequence in the N-terminal section; belongs to the N-acetylglucosamine-1-phosphate uridyltransferase family. In the C-terminal section; belongs to the transferase hexapeptide repeat family. Homotrimer. Requires Mg(2+) as cofactor.

Its subcellular location is the cytoplasm. The enzyme catalyses alpha-D-glucosamine 1-phosphate + acetyl-CoA = N-acetyl-alpha-D-glucosamine 1-phosphate + CoA + H(+). It carries out the reaction N-acetyl-alpha-D-glucosamine 1-phosphate + UTP + H(+) = UDP-N-acetyl-alpha-D-glucosamine + diphosphate. The protein operates within nucleotide-sugar biosynthesis; UDP-N-acetyl-alpha-D-glucosamine biosynthesis; N-acetyl-alpha-D-glucosamine 1-phosphate from alpha-D-glucosamine 6-phosphate (route II): step 2/2. It participates in nucleotide-sugar biosynthesis; UDP-N-acetyl-alpha-D-glucosamine biosynthesis; UDP-N-acetyl-alpha-D-glucosamine from N-acetyl-alpha-D-glucosamine 1-phosphate: step 1/1. Its pathway is bacterial outer membrane biogenesis; LPS lipid A biosynthesis. In terms of biological role, catalyzes the last two sequential reactions in the de novo biosynthetic pathway for UDP-N-acetylglucosamine (UDP-GlcNAc). The C-terminal domain catalyzes the transfer of acetyl group from acetyl coenzyme A to glucosamine-1-phosphate (GlcN-1-P) to produce N-acetylglucosamine-1-phosphate (GlcNAc-1-P), which is converted into UDP-GlcNAc by the transfer of uridine 5-monophosphate (from uridine 5-triphosphate), a reaction catalyzed by the N-terminal domain. In Actinobacillus pleuropneumoniae serotype 3 (strain JL03), this protein is Bifunctional protein GlmU.